The following is a 200-amino-acid chain: dITP/XTP pyrophosphatase (200 aa).

A substrate-binding site is contributed by 8-13 (SQNSSK). Glu-40 and Asp-69 together coordinate Mg(2+). The Proton acceptor role is filled by Asp-69. Substrate contacts are provided by residues Ser-70, 154–157 (FGYD), Lys-177, and 182–183 (HR).

This sequence belongs to the HAM1 NTPase family. Homodimer. It depends on Mg(2+) as a cofactor.

The enzyme catalyses XTP + H2O = XMP + diphosphate + H(+). It catalyses the reaction dITP + H2O = dIMP + diphosphate + H(+). The catalysed reaction is ITP + H2O = IMP + diphosphate + H(+). In terms of biological role, pyrophosphatase that catalyzes the hydrolysis of nucleoside triphosphates to their monophosphate derivatives, with a high preference for the non-canonical purine nucleotides XTP (xanthosine triphosphate), dITP (deoxyinosine triphosphate) and ITP. Seems to function as a house-cleaning enzyme that removes non-canonical purine nucleotides from the nucleotide pool, thus preventing their incorporation into DNA/RNA and avoiding chromosomal lesions. This Coxiella burnetii (strain RSA 493 / Nine Mile phase I) protein is dITP/XTP pyrophosphatase.